A 202-amino-acid chain; its full sequence is Josephin-1 (202 aa).

Residue Ser15 is modified to Phosphoserine. A Josephin domain is found at 23–202 (PPQIYHEKQR…EAHQSWRADV (180 aa)). Residue Cys36 is the Nucleophile of the active site. The active-site Proton acceptor is His139.

In terms of assembly, interacts with beta-actin/ACTB. In terms of processing, monoubiquitinated. Ubiquitination activates deubiquitination activity in vitro.

It is found in the cell membrane. The protein resides in the cytoplasm. It carries out the reaction Thiol-dependent hydrolysis of ester, thioester, amide, peptide and isopeptide bonds formed by the C-terminal Gly of ubiquitin (a 76-residue protein attached to proteins as an intracellular targeting signal).. In terms of biological role, deubiquitinates monoubiquitinated probes (in vitro). When ubiquitinated, cleaves 'Lys-63'-linked and 'Lys-48'-linked poly-ubiquitin chains (in vitro), hence may act as a deubiquitinating enzyme. May increase macropinocytosis and suppress clathrin- and caveolae-mediated endocytosis. May enhance membrane dynamics and cell motility independently of its catalytic activity. This chain is Josephin-1 (JOSD1), found in Bos taurus (Bovine).